The following is a 67-amino-acid chain: uncharacterized protein (67 aa).

This is an uncharacterized protein from Escherichia coli (Bacteriophage T4).